The chain runs to 440 residues: Gap junction gamma-2 protein (440 aa).

At 1-21 (MTNMSWSFLTRLLEEIHNHST) the chain is on the cytoplasmic side. Residues 22-42 (FVGKVWLTVLVVFRIVLTAVG) form a helical membrane-spanning segment. The Extracellular segment spans residues 43 to 78 (GESIYSDEQSKFTCNTRQPGCDNVCYDAFAPLSHVR). A helical transmembrane segment spans residues 79–99 (FWVFQIVVISTPSVMYLGYAV). The Cytoplasmic segment spans residues 100 to 223 (HRLARASEQE…AQLVVRAAFE (124 aa)). The tract at residues 108 to 199 (QERRRALRRR…TPGPAGQHDG (92 aa)) is disordered. Positions 112–124 (RALRRRPGTRRLP) are enriched in basic residues. Low complexity predominate over residues 136–149 (PDTTDLGEAEPILA). Positions 150-173 (LEEDEDEEPGAPEGPGEDTEEERA) are enriched in acidic residues. A helical membrane pass occupies residues 224–244 (VAFLVGQYLLYGFEVPPFFAC). Over 245 to 264 (SRQPCPHVVDCFVSRPTEKT) the chain is Extracellular. A helical transmembrane segment spans residues 265-285 (VFLLVMYVVSCLCLLLNLCEM). The Cytoplasmic segment spans residues 286–440 (AHLGLGSAQD…SRDGKATVWI (155 aa)). The interval 369–440 (DRDSPPCAGL…SRDGKATVWI (72 aa)) is disordered. Ser-372 is modified (phosphoserine). Low complexity predominate over residues 388 to 401 (VGGLASGTGSATSG).

It belongs to the connexin family. Gamma-type subfamily. A connexon is composed of a hexamer of connexins. Interacts with TJP1. Mainly expressed by oligodendrocytes in the central nervous system (at protein level).

The protein resides in the cell membrane. It is found in the cell junction. It localises to the gap junction. One gap junction consists of a cluster of closely packed pairs of transmembrane channels, the connexons, through which materials of low MW diffuse from one cell to a neighboring cell. May play a role in myelination in central and peripheral nervous systems. In Mus musculus (Mouse), this protein is Gap junction gamma-2 protein (Gjc2).